Here is a 200-residue protein sequence, read N- to C-terminus: uncharacterized protein (200 aa).

Residues Phe7–Phe29 traverse the membrane as a helical segment.

The protein resides in the membrane. This is an uncharacterized protein from Saccharomyces cerevisiae (strain ATCC 204508 / S288c) (Baker's yeast).